The primary structure comprises 401 residues: Membrane protein UL43 homolog (401 aa).

A run of 10 helical transmembrane segments spans residues 43-63 (FVGI…IDLL), 67-87 (STCL…RVPI), 93-113 (IVTV…SVWV), 124-144 (LIVV…ISLF), 159-179 (ASLL…LVEL), 182-202 (VPIG…FGLA), 259-279 (PGVI…WIVL), 294-314 (YVVF…QLVI), 332-352 (AVCM…SLAF), and 379-399 (ISRW…ATII).

It belongs to the alphaherpesvirinae HHV-1 UL43 family.

The protein localises to the membrane. This is Membrane protein UL43 homolog from Equine herpesvirus 1 (strain Ab4p) (EHV-1).